The primary structure comprises 249 residues: 4-hydroxy-tetrahydrodipicolinate reductase (249 aa).

Residues aspartate 32, 74–76, and 99–102 contribute to the NAD(+) site; these read GTT and SANY. The active-site Proton donor/acceptor is histidine 134. Histidine 135 provides a ligand contact to (S)-2,3,4,5-tetrahydrodipicolinate. Lysine 138 serves as the catalytic Proton donor. 144–145 lines the (S)-2,3,4,5-tetrahydrodipicolinate pocket; it reads GT.

It belongs to the DapB family.

The protein resides in the cytoplasm. It catalyses the reaction (S)-2,3,4,5-tetrahydrodipicolinate + NAD(+) + H2O = (2S,4S)-4-hydroxy-2,3,4,5-tetrahydrodipicolinate + NADH + H(+). The catalysed reaction is (S)-2,3,4,5-tetrahydrodipicolinate + NADP(+) + H2O = (2S,4S)-4-hydroxy-2,3,4,5-tetrahydrodipicolinate + NADPH + H(+). It participates in amino-acid biosynthesis; L-lysine biosynthesis via DAP pathway; (S)-tetrahydrodipicolinate from L-aspartate: step 4/4. Catalyzes the conversion of 4-hydroxy-tetrahydrodipicolinate (HTPA) to tetrahydrodipicolinate. This chain is 4-hydroxy-tetrahydrodipicolinate reductase, found in Chlorobaculum tepidum (strain ATCC 49652 / DSM 12025 / NBRC 103806 / TLS) (Chlorobium tepidum).